The following is a 2252-amino-acid chain: RNA1 polyprotein (2252 aa).

The Cytoplasmic portion of the chain corresponds to 565-1140; it reads MITTLAQSIF…QGREFIVSNG (576 aa). In terms of domain architecture, SF3 helicase spans 733 to 899; sequence MKDLLELQKR…PGVIFDPDNA (167 aa). 763–770 provides a ligand contact to ATP; it reads GPSHCGKS. A helical transmembrane segment spans residues 1141–1161; the sequence is GGILMIAAAIILVLVCGWGFW. Topologically, residues 1162–1187 are lumenal; that stretch reads KAFVGLFTGSMSLGAALAGCQEAEVK. A Peptidase C3 domain is found at 1213 to 1422; it reads SYARSQAGNG…WACILPNPHL (210 aa). Residues His1256, Glu1294, and Cys1386 each act as for picornain 3C-like protease activity in the active site. One can recognise a RdRp catalytic domain in the interval 1697 to 1825; sequence NEAINCDYSG…SVSPAVASWF (129 aa).

Belongs to the nepoviruses RNA1 polyprotein family. Specific enzymatic cleavages by picornain 3C-like protease in vivo yield mature proteins. Picornain 3C-like protease is autocatalytically processed. Post-translationally, VPg is uridylylated by the polymerase and is covalently linked to the 5'-end of genomic RNA. This uridylylated form acts as a nucleotide-peptide primer for the polymerase.

It is found in the host endoplasmic reticulum lumen. The protein resides in the host endoplasmic reticulum membrane. It carries out the reaction RNA(n) + a ribonucleoside 5'-triphosphate = RNA(n+1) + diphosphate. Picornain 3C-like protease is a thiol protease that cleaves the P1 and P2 polyproteins. The polypeptide is RNA1 polyprotein (Apium graveolens (Celery)).